We begin with the raw amino-acid sequence, 322 residues long: Ferredoxin--NADP reductase (322 aa).

FAD is bound by residues aspartate 34, glutamine 42, tyrosine 47, valine 87, phenylalanine 120, aspartate 279, and threonine 320.

This sequence belongs to the ferredoxin--NADP reductase type 2 family. In terms of assembly, homodimer. Requires FAD as cofactor.

It carries out the reaction 2 reduced [2Fe-2S]-[ferredoxin] + NADP(+) + H(+) = 2 oxidized [2Fe-2S]-[ferredoxin] + NADPH. The polypeptide is Ferredoxin--NADP reductase (Streptococcus pneumoniae (strain Hungary19A-6)).